The following is a 320-amino-acid chain: Mitochondrial glycine transporter (320 aa).

3 Solcar repeats span residues 8-92 (SKTT…LRQG), 121-205 (LSNW…LKRR), and 223-307 (SSSS…LILR). The next 6 helical transmembrane spans lie at 14 to 39 (FAAG…TRVQ), 67 to 93 (GTLP…RQGL), 127 to 152 (LATG…VRYE), 180 to 203 (GFGA…EQLK), 227 to 253 (INFV…KTRL), and 282 to 300 (GLGL…AWTV).

Belongs to the mitochondrial carrier (TC 2.A.29) family. SLC25A38 subfamily.

Its subcellular location is the mitochondrion inner membrane. The enzyme catalyses glycine(in) = glycine(out). In terms of biological role, mitochondrial glycine transporter that imports glycine into the mitochondrial matrix. Plays an important role in providing glycine for the first enzymatic step in heme biosynthesis, the condensation of glycine with succinyl-CoA to produce 5-aminolevulinate (ALA) in the mitochondrial matrix. The sequence is that of Mitochondrial glycine transporter from Aspergillus fumigatus (strain CBS 144.89 / FGSC A1163 / CEA10) (Neosartorya fumigata).